Reading from the N-terminus, the 143-residue chain is 16 kDa calcium-binding protein (143 aa).

EF-hand domains follow at residues 2–37, 41–71, 73–108, and 109–143; these read SEEKQWTEVFHAIDKDKNGFLTREEIAQCLKEVGVC, ADKIIKETDMNSDGKISLEEYLNALRKLPPR, KCVARWREVFQSIDKDGSGKVSIKELDEFLKTSGMD, and IDQNSLRNWMTQNDKNKDGELDYDEFLAYVRQTYK. Residues Asp-15, Asp-17, Asn-19, Glu-26, Asp-49, Asn-51, Asp-53, Lys-55, Glu-60, Asp-86, Asp-88, Ser-90, Lys-92, Glu-97, Asp-122, Asn-124, Asp-126, Glu-128, and Glu-133 each contribute to the Ca(2+) site.

Found in eggs.

Functionally, calcium-binding protein. The protein is 16 kDa calcium-binding protein of Schistosoma mansoni (Blood fluke).